The sequence spans 97 residues: Protein YukE (97 aa).

The stretch at 21–94 (VESQEVLNQV…ESTDQDIANQ (74 aa)) forms a coiled coil.

The protein belongs to the WXG100 family. sagEsxA-like subfamily. As to quaternary structure, homodimer.

The protein resides in the secreted. Required to deliver LXG toxins to target cells. This Bacillus subtilis (strain 168) protein is Protein YukE (yukE).